Consider the following 71-residue polypeptide: Small ribosomal subunit protein bS21 (71 aa).

The disordered stretch occupies residues 38 to 71; the sequence is YEKPTTERKRARASAIKRHAKKLARENARRTRLY. The segment covering 46-59 has biased composition (basic residues); the sequence is KRARASAIKRHAKK. Positions 60–71 are enriched in basic and acidic residues; it reads LARENARRTRLY.

It belongs to the bacterial ribosomal protein bS21 family.

The protein is Small ribosomal subunit protein bS21 of Hamiltonella defensa subsp. Acyrthosiphon pisum (strain 5AT).